The sequence spans 806 residues: Phosphatidylinositol 4-kinase beta (806 aa).

The PIK helical domain maps to 55–247 (LDKVKLIRGS…GTKLRKLILS (193 aa)). 2 disordered regions span residues 69–104 (LDKIDGSDTGDGGSLANGDAGPRHSESCGPPVSASR) and 253–310 (AHKK…DEPV). Residues 283 to 302 (DATVSISLSSNLKRTSSNPK) are compositionally biased toward polar residues. Residues 525–791 (EPWQEKVRRI…MVDGSMRSIT (267 aa)) enclose the PI3K/PI4K catalytic domain. The segment at 531–537 (VRRIREG) is G-loop. The segment at 658 to 666 (QVKDRHNGN) is catalytic loop. The tract at residues 677 to 701 (HIDFGFILSSSPRNLGFETSAFKLT) is activation loop.

The protein belongs to the PI3/PI4-kinase family. Type III PI4K subfamily. Mg(2+) is required as a cofactor. The cofactor is Mn(2+).

The protein resides in the endomembrane system. It localises to the mitochondrion outer membrane. The protein localises to the rough endoplasmic reticulum membrane. The catalysed reaction is a 1,2-diacyl-sn-glycero-3-phospho-(1D-myo-inositol) + ATP = a 1,2-diacyl-sn-glycero-3-phospho-(1D-myo-inositol 4-phosphate) + ADP + H(+). Its function is as follows. Phosphorylates phosphatidylinositol (PI) in the first committed step in the production of the second messenger inositol-1,4,5,-trisphosphate (PIP). May play an important role in the inner ear development. The polypeptide is Phosphatidylinositol 4-kinase beta (pi4kb) (Xenopus tropicalis (Western clawed frog)).